Reading from the N-terminus, the 139-residue chain is Probable disulfide formation protein C 1 (139 aa).

Residues 8–27 form a helical membrane-spanning segment; the sequence is EYALFTAWGASFIATLGSLY. Cys37 and Cys40 are oxidised to a cystine. Transmembrane regions (helical) follow at residues 42 to 61 and 68 to 85; these read YQRIFMYPFVLWLGIAVVKK and YSLPIASIGACISLYHYA. A disulfide bridge connects residues Cys99 and Cys104. Residues 113-135 traverse the membrane as a helical segment; it reads GFVTIPFLALIGFITIAVCSFIV.

It belongs to the DsbB family. BdbC subfamily.

It is found in the cell membrane. Functionally, required for disulfide bond formation in some proteins. The protein is Probable disulfide formation protein C 1 (bdbC1) of Bacillus cereus (strain ATCC 10987 / NRS 248).